The primary structure comprises 373 residues: MHNEAPITRRKSKRIYVGKVPVGDGAPIAVQSMTNTRTTDVAATVAQIKALERVGVDIVRVSVPTMDAAEAFRLIKQQVNVPLVADIHFDYRIALKVAEYGVDCLRINPGNIGNEERIRTVVDCARHYNIPIRIGVNGGSLEKDLQEKYGEPTPQALLESAMRHVDHLDRLNFDMFKVSVKASDVFLAVESYRLLAKQIDQPLHLGITEAGGARAGAVKSAIGLGLLLSEGIGDTLRISLAADPVEEVKVGFDILKSLRIRARGINFIACPTCSRQEFDVIGTVNALEERLEDIITPMDISIIGCVVNGPGEATVSTMGVTGGSKKSGFYEDGVRLRERLDNDNMIDQLEARIRAKATILDAARRIDIQQVEK.

Residues C270, C273, C305, and E312 each contribute to the [4Fe-4S] cluster site.

The protein belongs to the IspG family. Requires [4Fe-4S] cluster as cofactor.

It carries out the reaction (2E)-4-hydroxy-3-methylbut-2-enyl diphosphate + oxidized [flavodoxin] + H2O + 2 H(+) = 2-C-methyl-D-erythritol 2,4-cyclic diphosphate + reduced [flavodoxin]. Its pathway is isoprenoid biosynthesis; isopentenyl diphosphate biosynthesis via DXP pathway; isopentenyl diphosphate from 1-deoxy-D-xylulose 5-phosphate: step 5/6. Functionally, converts 2C-methyl-D-erythritol 2,4-cyclodiphosphate (ME-2,4cPP) into 1-hydroxy-2-methyl-2-(E)-butenyl 4-diphosphate. This is 4-hydroxy-3-methylbut-2-en-1-yl diphosphate synthase (flavodoxin) from Erwinia tasmaniensis (strain DSM 17950 / CFBP 7177 / CIP 109463 / NCPPB 4357 / Et1/99).